Consider the following 206-residue polypeptide: Ribosomal RNA small subunit methyltransferase G (206 aa).

Residues G73, L78, V124–E125, and R139 contribute to the S-adenosyl-L-methionine site.

This sequence belongs to the methyltransferase superfamily. RNA methyltransferase RsmG family.

It is found in the cytoplasm. It carries out the reaction guanosine(527) in 16S rRNA + S-adenosyl-L-methionine = N(7)-methylguanosine(527) in 16S rRNA + S-adenosyl-L-homocysteine. In terms of biological role, specifically methylates the N7 position of guanine in position 527 of 16S rRNA. This Sodalis glossinidius (strain morsitans) protein is Ribosomal RNA small subunit methyltransferase G.